The primary structure comprises 473 residues: 3-isopropylmalate dehydratase large subunit (473 aa).

[4Fe-4S] cluster contacts are provided by Cys354, Cys414, and Cys417.

The protein belongs to the aconitase/IPM isomerase family. LeuC type 1 subfamily. In terms of assembly, heterodimer of LeuC and LeuD. [4Fe-4S] cluster serves as cofactor.

It catalyses the reaction (2R,3S)-3-isopropylmalate = (2S)-2-isopropylmalate. The protein operates within amino-acid biosynthesis; L-leucine biosynthesis; L-leucine from 3-methyl-2-oxobutanoate: step 2/4. Functionally, catalyzes the isomerization between 2-isopropylmalate and 3-isopropylmalate, via the formation of 2-isopropylmaleate. This chain is 3-isopropylmalate dehydratase large subunit, found in Mycobacterium ulcerans (strain Agy99).